Consider the following 264-residue polypeptide: 3-methyl-2-oxobutanoate hydroxymethyltransferase (264 aa).

Asp-45 and Asp-84 together coordinate Mg(2+). 3-methyl-2-oxobutanoate contacts are provided by residues 45 to 46 (DS), Asp-84, and Lys-112. Glu-114 serves as a coordination point for Mg(2+). The active-site Proton acceptor is Glu-181.

The protein belongs to the PanB family. Homodecamer; pentamer of dimers. The cofactor is Mg(2+).

The protein localises to the cytoplasm. It catalyses the reaction 3-methyl-2-oxobutanoate + (6R)-5,10-methylene-5,6,7,8-tetrahydrofolate + H2O = 2-dehydropantoate + (6S)-5,6,7,8-tetrahydrofolate. It participates in cofactor biosynthesis; (R)-pantothenate biosynthesis; (R)-pantoate from 3-methyl-2-oxobutanoate: step 1/2. Functionally, catalyzes the reversible reaction in which hydroxymethyl group from 5,10-methylenetetrahydrofolate is transferred onto alpha-ketoisovalerate to form ketopantoate. The chain is 3-methyl-2-oxobutanoate hydroxymethyltransferase from Vibrio parahaemolyticus serotype O3:K6 (strain RIMD 2210633).